The following is a 476-amino-acid chain: Bifunctional protein HldE (476 aa).

Positions 1–318 (MAQYSAEFKQ…ENAIHARPET (318 aa)) are ribokinase. ATP is bound at residue 195 to 198 (NMSE). Residue Asp-264 is part of the active site. The tract at residues 344–476 (MTNGCFDILH…VIEKIKLLKD (133 aa)) is cytidylyltransferase.

In the N-terminal section; belongs to the carbohydrate kinase PfkB family. The protein in the C-terminal section; belongs to the cytidylyltransferase family. In terms of assembly, homodimer.

It carries out the reaction D-glycero-beta-D-manno-heptose 7-phosphate + ATP = D-glycero-beta-D-manno-heptose 1,7-bisphosphate + ADP + H(+). The catalysed reaction is D-glycero-beta-D-manno-heptose 1-phosphate + ATP + H(+) = ADP-D-glycero-beta-D-manno-heptose + diphosphate. It functions in the pathway nucleotide-sugar biosynthesis; ADP-L-glycero-beta-D-manno-heptose biosynthesis; ADP-L-glycero-beta-D-manno-heptose from D-glycero-beta-D-manno-heptose 7-phosphate: step 1/4. Its pathway is nucleotide-sugar biosynthesis; ADP-L-glycero-beta-D-manno-heptose biosynthesis; ADP-L-glycero-beta-D-manno-heptose from D-glycero-beta-D-manno-heptose 7-phosphate: step 3/4. It participates in bacterial outer membrane biogenesis; LOS core biosynthesis. Catalyzes the phosphorylation of D-glycero-D-manno-heptose 7-phosphate at the C-1 position to selectively form D-glycero-beta-D-manno-heptose-1,7-bisphosphate. Functionally, catalyzes the ADP transfer from ATP to D-glycero-beta-D-manno-heptose 1-phosphate, yielding ADP-D-glycero-beta-D-manno-heptose. The chain is Bifunctional protein HldE from Haemophilus influenzae (strain ATCC 51907 / DSM 11121 / KW20 / Rd).